Reading from the N-terminus, the 508-residue chain is UTP--glucose-1-phosphate uridylyltransferase (508 aa).

A Blocked amino end (Ser) modification is found at S2. Position 13 is a phosphoserine (S13). UTP-binding positions include 113 to 116 (LNGG), K127, Q190, and G222. Residue 115 to 116 (GG) coordinates substrate. Residue K127 coordinates Mg(2+). Residues H223 and 251 to 253 (NID) contribute to the substrate site. 2 residues coordinate UTP: D253 and K396. Residue D253 participates in Mg(2+) binding. K396 is a catalytic residue. Residue T426 is modified to Phosphothreonine. S434 is subject to Phosphoserine. K438 carries the post-translational modification N6-acetyllysine. Phosphoserine occurs at positions 448 and 461. The tract at residues 457–508 (HLTVSGDVTFGKNVSLKGTVIIIANHGDRIDIPPGAVLENKIVSGNLRILDH) is oligomerization. Residues 502 to 503 (NL) are critical for end-to-end subunit interaction.

The protein belongs to the UDPGP type 1 family. Homooctamer.

The protein localises to the cytoplasm. It carries out the reaction alpha-D-glucose 1-phosphate + UTP + H(+) = UDP-alpha-D-glucose + diphosphate. It functions in the pathway glycan biosynthesis; glycogen biosynthesis. In terms of biological role, UTP--glucose-1-phosphate uridylyltransferase catalyzing the conversion of glucose-1-phosphate into UDP-glucose, a crucial precursor for the production of glycogen. This is UTP--glucose-1-phosphate uridylyltransferase (UGP2) from Bos taurus (Bovine).